The chain runs to 637 residues: Probable potassium transport system protein Kup 2 (637 aa).

The next 12 membrane-spanning stretches (helical) occupy residues 18-38 (FLVLLLGSIGVVYGDIGTSPL), 61-81 (LISLMIWTLTIIVTFKYVLFL), 107-127 (MPVLFFAGLIGSALFIGDAMI), 145-165 (PAFSDYVLPLSALIMVGLFAV), 174-194 (AVFFGPITVVWFLAMAWGGLI), 211-231 (ALWFITHAGWAGLIVLGAVFL), 255-275 (WFILVFPALALNYLGQGALVL), 293-313 (ALFPMIILATMATVIASQAVI), 345-365 (IYVPAVNMVLFIGVLVLIFSF), 371-391 (LATAYGISVTGAMVVTTLMAF), 402-422 (AFTAAILLAPLFSIEAVFLAA), and 429-449 (DGGWVPLALAGVIILVMWTWT).

This sequence belongs to the HAK/KUP transporter (TC 2.A.72) family.

The protein localises to the cell inner membrane. It catalyses the reaction K(+)(in) + H(+)(in) = K(+)(out) + H(+)(out). Its function is as follows. Transport of potassium into the cell. Likely operates as a K(+):H(+) symporter. This chain is Probable potassium transport system protein Kup 2, found in Agrobacterium fabrum (strain C58 / ATCC 33970) (Agrobacterium tumefaciens (strain C58)).